The primary structure comprises 419 residues: G protein-activated inward rectifier potassium channel 4 (419 aa).

The Cytoplasmic portion of the chain corresponds to 1–86 (MAGDSRNAMN…LFTTLVDLKW (86 aa)). The residue at position 5 (Ser-5) is a Phosphoserine. The helical transmembrane segment at 87 to 111 (RFNLLVFTMVYTVTWLFFGFIWWLI) threads the bilayer. Topologically, residues 112 to 135 (AYIRGDLDHVGDQEWIPCVENLSG) are extracellular. Positions 136–147 (FVSAFLFSIETE) form an intramembrane region, helical; Pore-forming. An intramembrane region (pore-forming) is located at residues 148-154 (TTIGYGF). A Selectivity filter motif is present at residues 149–154 (TIGYGF). Topologically, residues 155-163 (RVITEKCPE) are extracellular. A helical transmembrane segment spans residues 164–185 (GIILLLVQAILGSIVNAFMVGC). At 186-419 (MFVKISQPKK…GGSREARGSV (234 aa)) the chain is on the cytoplasmic side. The interval 390–419 (AEAGLDAEAEQNEEDEPKGLGGSREARGSV) is disordered. Residues 394–405 (LDAEAEQNEEDE) show a composition bias toward acidic residues.

This sequence belongs to the inward rectifier-type potassium channel (TC 1.A.2.1) family. KCNJ5 subfamily. Associates with KCNJ3/GIRK1 to form a G-protein-activated heteromultimer pore-forming unit. The resulting inward current is much larger. Associates with KCNJ6/GIRK2 to form a G-protein-activated heteromultimer pore-forming unit. In terms of tissue distribution, islets, exocrine pancreas and heart. Expressed in the adrenal cortex, particularly the zona glomerulosa.

The protein localises to the membrane. The enzyme catalyses K(+)(in) = K(+)(out). Its activity is regulated as follows. Heteromultimer composed of KCNJ3/GIRK1 and KCNJ5/GIRK4 is activated by phosphatidylinositol 4,5 biphosphate (PtdIns(4,5)P2). Its function is as follows. Inward rectifier potassium channels are characterized by a greater tendency to allow potassium to flow into the cell rather than out of it. Their voltage dependence is regulated by the concentration of extracellular potassium; as external potassium is raised, the voltage range of the channel opening shifts to more positive voltages. The inward rectification is mainly due to the blockage of outward current by internal magnesium. Can be blocked by external barium. This potassium channel is controlled by G proteins. This is G protein-activated inward rectifier potassium channel 4 (KCNJ5) from Homo sapiens (Human).